The chain runs to 233 residues: Large ribosomal subunit protein uL3 (233 aa).

Residues 145 to 172 (FGSQRASHGNSRSHRVPGSIGQAQDPGR) form a disordered region. An N5-methylglutamine modification is found at glutamine 168.

Belongs to the universal ribosomal protein uL3 family. In terms of assembly, part of the 50S ribosomal subunit. Forms a cluster with proteins L14 and L19. Methylated by PrmB.

Functionally, one of the primary rRNA binding proteins, it binds directly near the 3'-end of the 23S rRNA, where it nucleates assembly of the 50S subunit. The polypeptide is Large ribosomal subunit protein uL3 (Bordetella petrii (strain ATCC BAA-461 / DSM 12804 / CCUG 43448)).